Consider the following 338-residue polypeptide: Putative transposase for insertion sequence element IS4SA (338 aa).

It belongs to the transposase 11 family.

This is Putative transposase for insertion sequence element IS4SA from Synechocystis sp. (strain ATCC 27184 / PCC 6803 / Kazusa).